A 245-amino-acid polypeptide reads, in one-letter code: Probable transcriptional regulatory protein CPR_1922 (245 aa).

It belongs to the TACO1 family.

The protein resides in the cytoplasm. The protein is Probable transcriptional regulatory protein CPR_1922 of Clostridium perfringens (strain SM101 / Type A).